The primary structure comprises 460 residues: Anthocyanidin 3-O-glucoside 5-O-glucosyltransferase 1 (460 aa).

The first 22 residues, 1-22 (MVRRRVLLATFPAQGHINPALQ), serve as a signal peptide directing secretion. Residue histidine 16 is the Proton acceptor of the active site. Residue histidine 16 participates in an anthocyanidin binding. UDP-alpha-D-glucose is bound by residues glutamine 338, histidine 353, tryptophan 356, asparagine 357, serine 358, glutamate 361, aspartate 377, and glutamine 378.

Belongs to the UDP-glycosyltransferase family.

The catalysed reaction is an anthocyanidin 3-O-beta-D-glucoside + UDP-alpha-D-glucose = an anthocyanidin 3,5-di-O-beta-D-glucoside + UDP + 2 H(+). Its pathway is pigment biosynthesis; anthocyanin biosynthesis. Catalyzes the glucosylation at the O-5 position of anthocyanidin 3-glucosides to form anthocyanidin 3,5-di-O-glucosides using UDP-glucose as sugar donor. Anthocyanidin 3,5-di-O-glucosides are molecules that are responsible for pigmentation. Also acts on anthocyanidin 3-O-(6-O-malonylglucoside). Much less active with hydroxycinnamoylglucose derivatives. No activity in the absence of the 3-O-glucoside group. The chain is Anthocyanidin 3-O-glucoside 5-O-glucosyltransferase 1 (PF3R4) from Perilla frutescens (Beefsteak mint).